The primary structure comprises 244 residues: Methylthioribulose-1-phosphate dehydratase (244 aa).

A substrate-binding site is contributed by cysteine 104. The Zn(2+) site is built by histidine 122 and histidine 124. The active-site Proton donor/acceptor is the glutamate 148. Histidine 204 serves as a coordination point for Zn(2+).

Belongs to the aldolase class II family. MtnB subfamily. It depends on Zn(2+) as a cofactor.

The protein localises to the cytoplasm. The catalysed reaction is 5-(methylsulfanyl)-D-ribulose 1-phosphate = 5-methylsulfanyl-2,3-dioxopentyl phosphate + H2O. It participates in amino-acid biosynthesis; L-methionine biosynthesis via salvage pathway; L-methionine from S-methyl-5-thio-alpha-D-ribose 1-phosphate: step 2/6. In terms of biological role, catalyzes the dehydration of methylthioribulose-1-phosphate (MTRu-1-P) into 2,3-diketo-5-methylthiopentyl-1-phosphate (DK-MTP-1-P). This is Methylthioribulose-1-phosphate dehydratase from Cryptococcus neoformans var. neoformans serotype D (strain B-3501A) (Filobasidiella neoformans).